Here is a 138-residue protein sequence, read N- to C-terminus: MAGIQLADEVTSVYNDFKLSHKYRYIVFKMNDGMTEVVVEKTAEKNATYDDFLKDLPEKSARYAVYDLEYDTPEGLRQKIIFYLWTPEGCKIREKMLYSATKATIKQALVGLSAEIQATDAGELNLDEVIAKVKTISK.

Positions 3-134 constitute an ADF-H domain; it reads GIQLADEVTS…NLDEVIAKVK (132 aa).

This sequence belongs to the actin-binding proteins ADF family. As to quaternary structure, interacts with F-actin. Does not interact with G-actin. Interacts with 14-3-3 protein 3.

Its subcellular location is the cytoplasm. The protein localises to the cytoskeleton. It localises to the cell membrane. The protein resides in the cell projection. It is found in the phagocytic cup. Its subcellular location is the pseudopodium. Functionally, actin-binding protein that severs actin filaments. In Entamoeba histolytica (strain ATCC 30459 / HM-1:IMSS / ABRM), this protein is Actophorin.